Here is a 91-residue protein sequence, read N- to C-terminus: RNA-binding protein Hfq (91 aa).

The Sm domain maps to Asp-9–Val-68. The disordered stretch occupies residues Ser-69–Glu-91.

Belongs to the Hfq family. Homohexamer.

Functionally, RNA chaperone that binds small regulatory RNA (sRNAs) and mRNAs to facilitate mRNA translational regulation in response to envelope stress, environmental stress and changes in metabolite concentrations. Also binds with high specificity to tRNAs. The chain is RNA-binding protein Hfq from Haemophilus influenzae (strain ATCC 51907 / DSM 11121 / KW20 / Rd).